We begin with the raw amino-acid sequence, 1449 residues long: ABC transporter G family member 21 (1449 aa).

The span at 1–10 (MEEYELREIA) shows a compositional bias: basic and acidic residues. The disordered stretch occupies residues 1-49 (MEEYELREIALQEGGSNLDINTPPNYDNPVGDGSSPPDSPDIQKSENQF). Residues 14-25 (GGSNLDINTPPN) are compositionally biased toward polar residues. Positions 130–383 (ISFFNLFKPS…FIDLGFDCEP (254 aa)) constitute an ABC transporter 1 domain. The region spanning 488–731 (WGDKFSLISR…ILSVEGKDYL (244 aa)) is the ABC transmembrane type-2 1 domain. Helical transmembrane passes span 519 to 539 (IPGL…NAFL), 577 to 597 (IPLT…MFGL), 602 to 622 (GKFF…TNLF), 634 to 654 (ISQN…GYTI), and 747 to 767 (FITY…MEYF). The ABC transporter 2 domain maps to 818–1062 (FTWQNINYTV…LTSYFERYGV (245 aa)). 854–861 (GSSGAGKT) lines the ATP pocket. The 235-residue stretch at 1152-1386 (FYTYGSFIQS…PISEPLTGYV (235 aa)) folds into the ABC transmembrane type-2 2 domain. A run of 6 helical transmembrane segments spans residues 1155–1175 (YGSF…FWSL), 1188–1208 (FIFE…PQFI), 1228–1248 (FAIS…TIFF), 1266–1286 (FYFW…GQAV), 1296–1316 (AHTL…VMVI), and 1423–1443 (LALI…FVYI).

The protein belongs to the ABC transporter superfamily. ABCG family. PDR (TC 3.A.1.205) subfamily.

The protein localises to the membrane. The chain is ABC transporter G family member 21 (abcG21) from Dictyostelium discoideum (Social amoeba).